The sequence spans 1257 residues: uncharacterized protein (1257 aa).

Residues 1-26 form a disordered region; that stretch reads MNFSNKPNKSRKKSNRKNKKSNKSNT. The segment covering 8–22 has biased composition (basic residues); sequence NKSRKKSNRKNKKSN.

The protein resides in the virion. This is an uncharacterized protein from Acanthamoeba polyphaga mimivirus (APMV).